Reading from the N-terminus, the 487-residue chain is uncharacterized protein (487 aa).

2 ABC transporter domains span residues 5-249 (VKFA…IPVK) and 265-487 (ISME…VIHA). 297–304 (GSNGSGKT) contributes to the ATP binding site.

Belongs to the ABC transporter superfamily.

It localises to the mitochondrion. This is an uncharacterized protein from Schizosaccharomyces pombe (strain 972 / ATCC 24843) (Fission yeast).